The primary structure comprises 134 residues: Phosphomevalonate dehydratase small subunit (134 aa).

S62 acts as the Proton acceptor in catalysis.

Belongs to the AcnX type II small subunit family. In terms of assembly, heterodimer composed of a large subunit (PMDh-L) and a small subunit (PMDh-S).

The enzyme catalyses (R)-5-phosphomevalonate = (2E)-3-methyl-5-phosphooxypent-2-enoate + H2O. It functions in the pathway isoprenoid biosynthesis; isopentenyl diphosphate biosynthesis via mevalonate pathway. In terms of biological role, component of a hydro-lyase that catalyzes the dehydration of mevalonate 5-phosphate (MVA5P) to form trans-anhydromevalonate 5-phosphate (tAHMP). Involved in the archaeal mevalonate (MVA) pathway, which provides fundamental precursors for isoprenoid biosynthesis, such as isopentenyl diphosphate (IPP) and dimethylallyl diphosphate (DMAPP). The sequence is that of Phosphomevalonate dehydratase small subunit from Pyrococcus horikoshii (strain ATCC 700860 / DSM 12428 / JCM 9974 / NBRC 100139 / OT-3).